Reading from the N-terminus, the 342-residue chain is Trace amine-associated receptor 8 (342 aa).

The Extracellular portion of the chain corresponds to 1 to 31 (MTSNFSQPVVQLCYEDVNGSCIETPYSPGSR). Residues asparagine 4 and asparagine 18 are each glycosylated (N-linked (GlcNAc...) asparagine). Disulfide bonds link cysteine 21/cysteine 185 and cysteine 104/cysteine 189. A helical transmembrane segment spans residues 32-52 (VILYTAFSFGSLLAVFGNLLV). The Cytoplasmic segment spans residues 53–67 (MTSVLHFKQLHSPTN). Residues 68–88 (FLIASLACADFLVGVTVMLFS) form a helical membrane-spanning segment. Residues 89 to 111 (MVRTVESCWYFGAKFCTLHSCCD) are Extracellular-facing. A helical transmembrane segment spans residues 112 to 132 (VAFCYSSVLHLCFICIDRYIV). Residues 133-146 (VTDPLVYATKFTVS) lie on the Cytoplasmic side of the membrane. Residues 147 to 167 (VSGICISVSWILPLTYSGAVF) form a helical membrane-spanning segment. Residues 168–195 (YTGVNDDGLEELVSALNCVGGCQIIVSQ) lie on the Extracellular side of the membrane. Residues 196–216 (GWVLIDFLLFFIPTLVMIILY) form a helical membrane-spanning segment. Over 217–258 (SKIFLIAKQQAIKIETTSSKVESSSESYKIRVAKRERKAAKT) the chain is Cytoplasmic. Residues 259–279 (LGVTVLAFVISWLPYTVDILI) form a helical membrane-spanning segment. A topological domain (extracellular) is located at residue aspartate 280. The helical transmembrane segment at 281 to 301 (AFMGFLTPAYIYEICCWSAYY) threads the bilayer. Residues 302–342 (NSAMNPLIYALFYPWFRKAIKLILSGDVLKASSSTISLFLE) lie on the Cytoplasmic side of the membrane.

It belongs to the G-protein coupled receptor 1 family. As to expression, expressed in kidney and amygdala. Not expressed in other tissues or brain regions tested.

It is found in the cell membrane. Olfactory receptor specific for trace amines. Trace amine compounds are enriched in animal body fluids and act on trace amine-associated receptors (TAARs) to elicit both intraspecific and interspecific innate behaviors. Ligand-binding causes a conformation change that triggers signaling via G alpha proteins, possibly G(i)/G(o) G alpha proteins. The chain is Trace amine-associated receptor 8 (TAAR8) from Homo sapiens (Human).